A 250-amino-acid polypeptide reads, in one-letter code: Cell division protein ZapD (250 aa).

Belongs to the ZapD family. Interacts with FtsZ.

Its subcellular location is the cytoplasm. In terms of biological role, cell division factor that enhances FtsZ-ring assembly. Directly interacts with FtsZ and promotes bundling of FtsZ protofilaments, with a reduction in FtsZ GTPase activity. The protein is Cell division protein ZapD of Yersinia pseudotuberculosis serotype O:1b (strain IP 31758).